The following is a 189-amino-acid chain: MADEQQQTLDPQAPEQTDAPEAAKDLTARVQELEEQLAAAQDQSLRLVADLQNVRRRAEQDVEKAHKFALEKFAGDLLAVVDTLERGLQMSNPDDEAIRPMREGMELTLKMFDDTLRRYQVEAINPEGEPFNPEQHQAMVMEESATAEPGSVLKVFQKGYLISGRLLRPAMVVVSKAPSETPPSIDEQA.

Residues 1–10 (MADEQQQTLD) show a composition bias toward polar residues. Residues 1–21 (MADEQQQTLDPQAPEQTDAPE) form a disordered region.

It belongs to the GrpE family. As to quaternary structure, homodimer.

It localises to the cytoplasm. In terms of biological role, participates actively in the response to hyperosmotic and heat shock by preventing the aggregation of stress-denatured proteins, in association with DnaK and GrpE. It is the nucleotide exchange factor for DnaK and may function as a thermosensor. Unfolded proteins bind initially to DnaJ; upon interaction with the DnaJ-bound protein, DnaK hydrolyzes its bound ATP, resulting in the formation of a stable complex. GrpE releases ADP from DnaK; ATP binding to DnaK triggers the release of the substrate protein, thus completing the reaction cycle. Several rounds of ATP-dependent interactions between DnaJ, DnaK and GrpE are required for fully efficient folding. This Pseudomonas paraeruginosa (strain DSM 24068 / PA7) (Pseudomonas aeruginosa (strain PA7)) protein is Protein GrpE.